Here is a 449-residue protein sequence, read N- to C-terminus: Glutamate--tRNA ligase 2 (449 aa).

The 'HIGH' region motif lies at 11-21 (PSPTGFLHIGN). The 'KMSKS' region motif lies at 242–246 (GLSKR). K245 lines the ATP pocket.

Belongs to the class-I aminoacyl-tRNA synthetase family. Glutamate--tRNA ligase type 1 subfamily. Monomer.

The protein localises to the cytoplasm. The catalysed reaction is tRNA(Glu) + L-glutamate + ATP = L-glutamyl-tRNA(Glu) + AMP + diphosphate. Functionally, catalyzes the attachment of glutamate to tRNA(Glu) in a two-step reaction: glutamate is first activated by ATP to form Glu-AMP and then transferred to the acceptor end of tRNA(Glu). This Methylorubrum populi (strain ATCC BAA-705 / NCIMB 13946 / BJ001) (Methylobacterium populi) protein is Glutamate--tRNA ligase 2.